A 157-amino-acid chain; its full sequence is Transcription elongation factor GreB (157 aa).

Belongs to the GreA/GreB family. GreB subfamily.

Functionally, necessary for efficient RNA polymerase transcription elongation past template-encoded arresting sites. The arresting sites in DNA have the property of trapping a certain fraction of elongating RNA polymerases that pass through, resulting in locked ternary complexes. Cleavage of the nascent transcript by cleavage factors such as GreA or GreB allows the resumption of elongation from the new 3'terminus. GreB releases sequences of up to 9 nucleotides in length. The sequence is that of Transcription elongation factor GreB from Salmonella typhimurium (strain LT2 / SGSC1412 / ATCC 700720).